A 140-amino-acid polypeptide reads, in one-letter code: Large ribosomal subunit protein uL11 (140 aa).

This sequence belongs to the universal ribosomal protein uL11 family. As to quaternary structure, part of the ribosomal stalk of the 50S ribosomal subunit. Interacts with L10 and the large rRNA to form the base of the stalk. L10 forms an elongated spine to which L12 dimers bind in a sequential fashion forming a multimeric L10(L12)X complex. Post-translationally, one or more lysine residues are methylated.

In terms of biological role, forms part of the ribosomal stalk which helps the ribosome interact with GTP-bound translation factors. This chain is Large ribosomal subunit protein uL11, found in Gemmatimonas aurantiaca (strain DSM 14586 / JCM 11422 / NBRC 100505 / T-27).